A 393-amino-acid chain; its full sequence is Metal tolerance protein A2 (393 aa).

Topologically, residues 1–72 (MVTPKLHLDL…EAQERAASMR (72 aa)) are cytoplasmic. Residues 73 to 93 (KLLIAVLLCAIFIVVEVVGGI) traverse the membrane as a helical segment. The Vacuolar portion of the chain corresponds to 94–105 (KANSLAILTDAA). The helical transmembrane segment at 106-126 (HLLSDVAAFAISLFSLWASGW) threads the bilayer. Residues 127–138 (KANPQQSYGFFR) are Cytoplasmic-facing. A helical membrane pass occupies residues 139–159 (IEILGALVSIQMIWLLAGILV). Residues 160 to 176 (YEAIVRLNNGSGEVEGS) are Vacuolar-facing. The chain crosses the membrane as a helical span at residues 177–197 (LMFAVSAVGLLVNIAMAILLG). Residues 198–233 (HDHGHGHGHSHDNGHGHSHDHGHGIAATEHHHDSGH) are required for zinc-binding. The Cytoplasmic segment spans residues 198–257 (HDHGHGHGHSHDNGHGHSHDHGHGIAATEHHHDSGHDESQLSDVLIEQKKQRNVNIQGAY). Residues 202-236 (HGHGHSHDNGHGHSHDHGHGIAATEHHHDSGHDES) show a composition bias toward basic and acidic residues. The disordered stretch occupies residues 202-237 (HGHGHSHDNGHGHSHDHGHGIAATEHHHDSGHDESQ). Residues 258 to 278 (LHVLGDSIQSVGVMIGGAIIW) traverse the membrane as a helical segment. The Vacuolar segment spans residues 279-284 (YKPEWK). A helical membrane pass occupies residues 285-305 (ILDLICTLVFSVIVLGTTIGM). At 306-393 (LRNILEVLME…SHVTIQIERQ (88 aa)) the chain is on the cytoplasmic side.

The protein belongs to the cation diffusion facilitator (CDF) transporter (TC 2.A.4) family. SLC30A subfamily.

Its subcellular location is the membrane. Involved in sequestration of excess zinc in the cytoplasm into vacuoles to maintain zinc homeostasis. This Arabidopsis thaliana (Mouse-ear cress) protein is Metal tolerance protein A2 (MTPA2).